A 55-amino-acid polypeptide reads, in one-letter code: Sporulation killing factor (55 aa).

Positions 1–29 (MKRNQKEWESVSKKGLMKPGGTSIVKAAG) are excised as a propeptide. Cysteine 30 and cysteine 45 are disulfide-bonded. Residues 30–55 (CMGCWASKSIAMTRVCALPHPAMRAI) constitute a cross-link (cyclopeptide (Cys-Ile)). Residues 33 to 41 (CWASKSIAM) constitute a cross-link (2-(S-cysteinyl)-methionine (Cys-Met)).

Post-translationally, this is a cyclic peptide. The first step in SKF maturation is probably thioether bond formation.

The protein resides in the secreted. In terms of biological role, produces a 26-residue extracellular sporulation killing factor (SKF) that induces the lysis of other B.subtilis cells that have not entered the sporulation pathway, providing a source of nutrients to support sporulation, and at the same time delaying commitment to the energetically expensive and irreversible onset of sporulation. Can also inhibit growth of other bacteria at high concentrations. Addition of SKF to solid cultures induces killing, but it is much less effective than SDP (AC O34344). Has a role in protecting the secreted lipase LipA against proteolysis, either by modulating its folding or by acting as a protease inhibitor. The sequence is that of Sporulation killing factor from Bacillus subtilis (strain 168).